The chain runs to 357 residues: DNA replication and repair protein RecF (357 aa).

30–37 provides a ligand contact to ATP; the sequence is GANGSGKT.

Belongs to the RecF family.

Its subcellular location is the cytoplasm. The RecF protein is involved in DNA metabolism; it is required for DNA replication and normal SOS inducibility. RecF binds preferentially to single-stranded, linear DNA. It also seems to bind ATP. This is DNA replication and repair protein RecF from Klebsiella pneumoniae subsp. pneumoniae (strain ATCC 700721 / MGH 78578).